The sequence spans 224 residues: Protein YiiM (224 aa).

Residues 26-163 enclose the MOSC domain; the sequence is IQVDGELMLT…VSADAPLELV (138 aa).

Monomer.

In Escherichia coli (strain K12), this protein is Protein YiiM (yiiM).